Consider the following 199-residue polypeptide: MKITDQLIPTVIESTGRYERAYDIYSRLLKDRIVFLGYAIDDHVANLVVAQLLFLEAEDPDKDIQLYINSPGGSVTAGLAIYDTMQYIKSDVVTICVGQAASMAAVLLASGTKGKRFALPNARIMLHQPLGGAEGPVKDVEIITKELLRIKNLINTILSEKTGQPLDRIEKDTDRDFFMSAYEALDYGLVDKVIESKRR.

S102 functions as the Nucleophile in the catalytic mechanism. H127 is an active-site residue.

This sequence belongs to the peptidase S14 family. As to quaternary structure, fourteen ClpP subunits assemble into 2 heptameric rings which stack back to back to give a disk-like structure with a central cavity, resembling the structure of eukaryotic proteasomes.

It is found in the cytoplasm. The catalysed reaction is Hydrolysis of proteins to small peptides in the presence of ATP and magnesium. alpha-casein is the usual test substrate. In the absence of ATP, only oligopeptides shorter than five residues are hydrolyzed (such as succinyl-Leu-Tyr-|-NHMec, and Leu-Tyr-Leu-|-Tyr-Trp, in which cleavage of the -Tyr-|-Leu- and -Tyr-|-Trp bonds also occurs).. Cleaves peptides in various proteins in a process that requires ATP hydrolysis. Has a chymotrypsin-like activity. Plays a major role in the degradation of misfolded proteins. The sequence is that of ATP-dependent Clp protease proteolytic subunit from Pseudothermotoga lettingae (strain ATCC BAA-301 / DSM 14385 / NBRC 107922 / TMO) (Thermotoga lettingae).